We begin with the raw amino-acid sequence, 95 residues long: Small ribosomal subunit protein bS16 (95 aa).

The protein belongs to the bacterial ribosomal protein bS16 family.

The chain is Small ribosomal subunit protein bS16 from Roseiflexus sp. (strain RS-1).